The chain runs to 681 residues: Macrolide export ATP-binding/permease protein MacB (681 aa).

In terms of domain architecture, ABC transporter spans 6 to 244 (LKLAAVTRRF…FAEVGVGAAA (239 aa)). ATP is bound at residue 42 to 49 (GASGSGKS). The tract at residues 246–274 (TETAADTRSAPASGDAPPPANNDTAADPA) is disordered. 4 helical membrane-spanning segments follow: residues 306 to 326 (LLTM…VAVG), 554 to 574 (LTLL…IGVM), 611 to 631 (LVCL…GALF), and 644 to 664 (AGAI…FGFM).

This sequence belongs to the ABC transporter superfamily. Macrolide exporter (TC 3.A.1.122) family. As to quaternary structure, homodimer.

The protein localises to the cell inner membrane. Non-canonical ABC transporter that contains transmembrane domains (TMD), which form a pore in the inner membrane, and an ATP-binding domain (NBD), which is responsible for energy generation. Confers resistance against macrolides. The protein is Macrolide export ATP-binding/permease protein MacB of Burkholderia cenocepacia (strain HI2424).